Reading from the N-terminus, the 116-residue chain is NADH-ubiquinone oxidoreductase chain 3 (116 aa).

Transmembrane regions (helical) follow at residues Phe10–Ala30, Phe64–Leu84, and Val88–Val108.

The protein belongs to the complex I subunit 3 family.

It localises to the mitochondrion membrane. It carries out the reaction a ubiquinone + NADH + 5 H(+)(in) = a ubiquinol + NAD(+) + 4 H(+)(out). Core subunit of the mitochondrial membrane respiratory chain NADH dehydrogenase (Complex I) that is believed to belong to the minimal assembly required for catalysis. Complex I functions in the transfer of electrons from NADH to the respiratory chain. The immediate electron acceptor for the enzyme is believed to be ubiquinone. This chain is NADH-ubiquinone oxidoreductase chain 3 (ND3), found in Patiria pectinifera (Starfish).